Consider the following 273-residue polypeptide: Eukaryotic translation initiation factor 3 subunit J (273 aa).

The disordered stretch occupies residues M1–E158. The span at D34–V54 shows a compositional bias: acidic residues. The stretch at E50–S97 forms a coiled coil. Over residues E55–A75 the composition is skewed to basic and acidic residues. The segment covering E95–T104 has biased composition (acidic residues). Positions E105–D126 are enriched in basic and acidic residues.

The protein belongs to the eIF-3 subunit J family. Component of the eukaryotic translation initiation factor 3 (eIF-3) complex.

The protein localises to the cytoplasm. Component of the eukaryotic translation initiation factor 3 (eIF-3) complex, which is involved in protein synthesis of a specialized repertoire of mRNAs and, together with other initiation factors, stimulates binding of mRNA and methionyl-tRNAi to the 40S ribosome. The eIF-3 complex specifically targets and initiates translation of a subset of mRNAs involved in cell proliferation. The chain is Eukaryotic translation initiation factor 3 subunit J from Pyricularia oryzae (strain 70-15 / ATCC MYA-4617 / FGSC 8958) (Rice blast fungus).